The primary structure comprises 346 residues: NADH-ubiquinone oxidoreductase chain 2 (346 aa).

The next 10 membrane-spanning stretches (helical) occupy residues 3–23 (PIIF…VMIS), 25–45 (HWLL…PIMM), 67–87 (SMLL…WTVM), 96–116 (MLMT…FWVP), 122–142 (IPLS…MSVL), 145–165 (IFPS…ILIG), 200–220 (TLLN…MFMA), 238–258 (IMTI…PLSG), 273–293 (NSII…YFYM), and 324–344 (FLPT…MLSV).

Belongs to the complex I subunit 2 family. In terms of assembly, core subunit of respiratory chain NADH dehydrogenase (Complex I) which is composed of 45 different subunits. Interacts with TMEM242.

It is found in the mitochondrion inner membrane. The catalysed reaction is a ubiquinone + NADH + 5 H(+)(in) = a ubiquinol + NAD(+) + 4 H(+)(out). Its function is as follows. Core subunit of the mitochondrial membrane respiratory chain NADH dehydrogenase (Complex I) which catalyzes electron transfer from NADH through the respiratory chain, using ubiquinone as an electron acceptor. Essential for the catalytic activity and assembly of complex I. This Bos mutus grunniens (Wild yak) protein is NADH-ubiquinone oxidoreductase chain 2.